We begin with the raw amino-acid sequence, 2742 residues long: MFCLWIFSLAFLHLHLCSVSSSSLEGSGFFVGWINASSLQLFASIGGCDLSPCMDEGQEGMEALYRSEEPFQCSIRASASPGRRQAGRTCVRKVPGNLAVHCHLLSENEGLEEEDLLRITVMTPRGQSSLQVNVSHGGLLTACSDWIWNTSEKHKNNVPASGLHLGISLEVPCCTSCTRFGSDSELVEEQCSALHVSVSDVLVKDYICCLTPRDKDKTLNRTETPCLYSSNSLKDSLVRGRVYQMSFEECFRWHLLVVLLMLEAQYNHSQEVHEDPSSTVKLCDYAVRIHAEKQAYSTNTDIPLLAVVDILDPVEFLWDFGDFTSARANSRTITKRYTNPGIYKLVVVASWGQMSVRSHVLSLVVQRAVKLNRLVHEPSVLQNHTVTVSCRVNVGTNLTFLWNFGDGTVRTGLSTEQHVFTRTGEFRVMVIASNLVSSASLSSYLFVVDRPCQPPPVKNLGPPNIQVRRNEVVFLGVTFESELNCNVSRELHYSWTVYDSAGLTFPLPLTNTHRQSLVLQSYTLPYGIYKAIARVQIVGSVVYSNYSVRLQVVPNSVVVVIQGGTNIYVNTKSSNEVTLDGQASYDPDFPLNPLRYSWTCQPVSTISSSCFSQSIPTSYPVLKFPTSLLKSNFDQFKFTLTVHSGERSASSEIFLTLTSHLAGKLFVHCPECQGDQVSWDQSFSVRAECEDCNVSAEFIQYSWSLFRVNASSKPVAEIPFCYTVDLNAPSAVLENASTPTPAPEMSPSHHFNADWTRFTEDSLASSSPSRIYKSKNRNSELTDSPVSSVTVGFSGSESFNGPPGVDRGSSQFSNFPGQRDMFSEFQSDPESSAEWEFTFPYLESEDLRGQRGDSRVPFPRPEEGDPGISAGRPKETDMESFPSDSDSFSHSSSNKGEGSNLVDPRPSVRLQKPGLLDLHRDSVDKSLFESYTYTGISSCFLSFRSFSLKPSSTYMLELTAKSQRRFYGQTQLFLKVKPVPKGVACQVQPVRGIELYTHFSIFCTSGREDLIYTYSFSVGGRMPRILYQGRDFLYYFSLPSGDPTDDYKVIIYTEIRSSMYGSAKKLCPVTVRVEPSFVRNASSSYSHHEPDLMISDSGLRNVSVLVQLGNIAEIYNYISLLSTILNRLSLDSQANTHALKHLRNVLICIVCKLEYSAQASPADGIFILNELLRVTSQVTVQSARWVTAHVGALSVQFSESNRSILSALVSLLSSSLQVVTSSPETSDSADSPQPLESHLVTGKSRNAFVDDADHCITDLSETTYNKQSEPVPKRLMMRLVNDLLQTTSDLMLRNFDLQKTKELQVQSDLITLCAGFLNKTSTAINCGLITFFLPASLIKMLLLHDGISAKRGFSQREQPSCVQRIGMELLHNPYEWGRYPIQLKGPVADLSLYSCKTRRKIPVHSFLQPITVELRHPQKTSSMSEYTLLRSQINYHNFSITQEHLQQAVQVTVVFTAPPHMAFPVKILFRMFERPTPSMHHLHRLLNWRNNTILLTLPPSYLSAAGVGHLALLDANFGKTPTRRHLAEQISYSLTVESSLCLSWEDQQGSWTQNGCRAQTNDKTSAVNCSCHHLKPLKVLQQQIQSSHFRADLDQFLSVSRDLTVVFVLLLCVSLNIPVLVWCKKTDATSEENNRAHFLPDNSATDQHFYAVTVHTGLCSAARMSARVYVVLHGEDGCSQTKELHVPGCTLFRRNSQNTFILSVADSLGSVQGVHIWHNNSGPSPEWYLKQVQVSELMPGHMEGRSWQFISQCWLAVNKGDGQVERMLRVSTHGLTFSKMLFLKLFEYMPDYHIWMSVYTCPSPHLFTRAQRLCVCLLLFLGYACVNIIITHQRDDQLPFDLGVIDVTSVSIATGLVSVVAVLPVAMVISFLFRVKSGRMTLENYDNVFSKRPSGKTKYQDTDFLSVSTTNLENKDADDKEAVTPQRNKRRKDSVSFESIHELLFQEVLQVSRRRSLFLKKSKGNDSELSPQSSEFCGALKATKNEAQSVRVKRRYRLASLLYHCVAWTLCLLFCLSCLILSAVLGTRLNSGKILHWIHSLFVSLTFCFFVIHPATILVLAAVVSWRFKRSQDFHCFFNKMNSHLEDLKHQDPDQLRPSAFTRTRAPNAEKILEARQRARYLRRVHPPTRAELRKTRTKRKKQAVIHKMLRDLCLCGSMFFLMVCITYGSPVDEHYPLNAAFRRHFIRAHGDDFMSIKKYEDWWKWAQTSLLSSLYYNESENPQMSFISIGAPLVQKTEVCGTFHSQVSMVTPPRPRYHTGSSSKQEVTVGLGYTRSEGASKLRLLHLSGWLSEQTVALKVQFSLYSPAPNLFSSVTLLSEQSSTGLLQSSATVQSVRLYHSPSMLDYTVMVWQLLFLLLSLVNLYHQTSTAAQHGLMGYWKTTSISVEVSLVIVSLVYYVHYVYHPTMVMEVAEQLRRNHREHVDVSTLANSEQFSRTLRGIILFLLAVKCVTVVRLNRILAPSMPLLSLSSLLWPAISGLLLLSIFSCMGRLLYIERTFHSIQTVLWHFWSLRKSRDLISLWRDFYYFGLLYASSAMLTTMVFAVMIRKAKRSPSTKNDPTIREVLGCISQKFTGMKTQIPDCHTQKTYFLEECESLVDELLFKLNALSNSLHHTLPPKLHTYTDKDSPDASSTTELCKERLQDLVRSLSVGQGEAALTFPHDRSLLELQEEEEVKHQEGRCSVGCKESRLPETLWTADYRESMDEHWTEKKSSNGLGGATYSHVVVVEALVHHEQGTKN.

At 1-1602 the chain is on the extracellular side; sequence MFCLWIFSLA…LDQFLSVSRD (1602 aa). N-linked (GlcNAc...) asparagine glycans are attached at residues Asn-35, Asn-133, Asn-149, Asn-220, and Asn-267. 2 consecutive PKD domains span residues 286–372 and 370–454; these read AVRI…VKLN and KLNR…PCQP. Residues Asn-383, Asn-397, Asn-486, Asn-545, Asn-693, Asn-709, and Asn-735 are each glycosylated (N-linked (GlcNAc...) asparagine). The REJ domain maps to 452-1338; sequence CQPPPVKNLG…ITFFLPASLI (887 aa). 2 disordered regions span residues 767-829 and 846-908; these read SPSR…QSDP and DLRG…RPSV. The segment covering 779-799 has biased composition (polar residues); the sequence is SELTDSPVSSVTVGFSGSESF. The span at 880–893 shows a compositional bias: low complexity; it reads SFPSDSDSFSHSSS. 7 N-linked (GlcNAc...) asparagine glycosylation sites follow: Asn-1080, Asn-1101, Asn-1201, Asn-1318, Asn-1437, Asn-1490, and Asn-1568. Residues 1436-1587 enclose the GAIN-B domain; the sequence is HNFSITQEHL…KVLQQQIQSS (152 aa). Intrachain disulfides connect Cys-1541–Cys-1569 and Cys-1556–Cys-1571. A GPS region spans residues 1541–1587; the sequence is CLSWEDQQGSWTQNGCRAQTNDKTSAVNCSCHHLKPLKVLQQQIQSS. A helical membrane pass occupies residues 1603–1623; sequence LTVVFVLLLCVSLNIPVLVWC. The Cytoplasmic portion of the chain corresponds to 1624 to 1812; sequence KKTDATSEEN…SPHLFTRAQR (189 aa). The 122-residue stretch at 1648–1769 folds into the PLAT domain; the sequence is HFYAVTVHTG…GDGQVERMLR (122 aa). A helical membrane pass occupies residues 1813 to 1833; it reads LCVCLLLFLGYACVNIIITHQ. Topologically, residues 1834-1851 are extracellular; that stretch reads RDDQLPFDLGVIDVTSVS. Residues 1852–1872 traverse the membrane as a helical segment; it reads IATGLVSVVAVLPVAMVISFL. Residues 1873–2005 lie on the Cytoplasmic side of the membrane; the sequence is FRVKSGRMTL…YRLASLLYHC (133 aa). Residues 2006 to 2026 traverse the membrane as a helical segment; it reads VAWTLCLLFCLSCLILSAVLG. Topologically, residues 2027–2040 are extracellular; the sequence is TRLNSGKILHWIHS. Residues 2041–2061 form a helical membrane-spanning segment; it reads LFVSLTFCFFVIHPATILVLA. The Cytoplasmic segment spans residues 2062-2151; the sequence is AVVSWRFKRS…KQAVIHKMLR (90 aa). The chain crosses the membrane as a helical span at residues 2152-2172; the sequence is DLCLCGSMFFLMVCITYGSPV. Residues 2173–2344 lie on the Extracellular side of the membrane; it reads DEHYPLNAAF…QSVRLYHSPS (172 aa). N-linked (GlcNAc...) asparagine glycosylation occurs at Asn-2218. Residues 2345 to 2365 form a helical membrane-spanning segment; sequence MLDYTVMVWQLLFLLLSLVNL. The Cytoplasmic portion of the chain corresponds to 2366–2378; sequence YHQTSTAAQHGLM. A helical transmembrane segment spans residues 2379–2401; sequence GYWKTTSISVEVSLVIVSLVYYV. At 2402 to 2442 the chain is on the extracellular side; the sequence is HYVYHPTMVMEVAEQLRRNHREHVDVSTLANSEQFSRTLRG. The helical transmembrane segment at 2443–2463 threads the bilayer; that stretch reads IILFLLAVKCVTVVRLNRILA. The Cytoplasmic portion of the chain corresponds to 2464-2467; that stretch reads PSMP. A helical transmembrane segment spans residues 2468–2488; the sequence is LLSLSSLLWPAISGLLLLSIF. At 2489-2528 the chain is on the extracellular side; that stretch reads SCMGRLLYIERTFHSIQTVLWHFWSLRKSRDLISLWRDFY. A helical membrane pass occupies residues 2529–2549; sequence YFGLLYASSAMLTTMVFAVMI. Residues 2550-2742 are Cytoplasmic-facing; sequence RKAKRSPSTK…LVHHEQGTKN (193 aa).

The protein belongs to the polycystin family. Heterodimer. Interacts with pkd2 to form a calcium channel. Interacts with pkd2l1 to form ciliary calcium channel. Expressed in Kupffer's vesicle, an organ equivalent to the node.

It is found in the cell projection. The protein resides in the cilium membrane. Its function is as follows. Component of a calcium-permeant ion channel formed by PKD1L2 and PKD1L1 in primary cilia, where it controls cilium calcium concentration, without affecting cytoplasmic calcium concentration, and regulates sonic hedgehog/SHH signaling and GLI2 transcription. The PKD1L1:PKD2L1 channel complex is mechanosensitive only at high pressures and is highly temperature sensitive. Also involved in left/right axis specification downstream of nodal flow by forming a complex with PKD2 in cilia to facilitate flow detection in left/right patterning. In Oryzias latipes (Japanese rice fish), this protein is Polycystin-1-like protein 1.